Reading from the N-terminus, the 504-residue chain is Glycerol kinase (504 aa).

Residue Thr-13 coordinates ADP. ATP contacts are provided by Thr-13, Thr-14, and Ser-15. Thr-13 lines the sn-glycerol 3-phosphate pocket. Arg-17 lines the ADP pocket. Sn-glycerol 3-phosphate contacts are provided by Arg-83, Glu-84, and Tyr-135. 3 residues coordinate glycerol: Arg-83, Glu-84, and Tyr-135. Phosphohistidine; by HPr is present on His-231. Asp-245 lines the sn-glycerol 3-phosphate pocket. Positions 245 and 246 each coordinate glycerol. ADP-binding residues include Thr-267 and Gly-310. Positions 267, 310, 314, and 411 each coordinate ATP. Positions 411 and 415 each coordinate ADP.

The protein belongs to the FGGY kinase family. As to quaternary structure, homotetramer and homodimer (in equilibrium). Post-translationally, the phosphoenolpyruvate-dependent sugar phosphotransferase system (PTS), including enzyme I, and histidine-containing protein (HPr) are required for the phosphorylation, which leads to the activation of the enzyme.

It carries out the reaction glycerol + ATP = sn-glycerol 3-phosphate + ADP + H(+). The protein operates within polyol metabolism; glycerol degradation via glycerol kinase pathway; sn-glycerol 3-phosphate from glycerol: step 1/1. Its activity is regulated as follows. Activated by phosphorylation and inhibited by fructose 1,6-bisphosphate (FBP). In terms of biological role, key enzyme in the regulation of glycerol uptake and metabolism. Catalyzes the phosphorylation of glycerol to yield sn-glycerol 3-phosphate. This Ligilactobacillus salivarius (strain UCC118) (Lactobacillus salivarius) protein is Glycerol kinase.